The primary structure comprises 319 residues: Coiled-coil domain-containing protein PF3D7_1144200 (319 aa).

Residues 1 to 12 (MSEEHSNDHIED) show a composition bias toward basic and acidic residues. 2 disordered regions span residues 1-43 (MSEE…SESS) and 112-158 (KLEK…NQHN). Residues 16–26 (CSQNCDETNSP) show a composition bias toward polar residues. Composition is skewed to basic and acidic residues over residues 27-36 (KNEKDEKDFK) and 112-131 (KLEKEKEKNEKKEKKEKKVT). Coiled coils occupy residues 100 to 134 (DLANKKENKTKFKLEKEKEKNEKKEKKEKKVTNDS), 166 to 242 (ELNE…IKKN), and 281 to 310 (NSNCEQIQNVRDEFAELKNDLNKIMNLINI). Residues 132 to 150 (NDSTNNKNKNNSVPFLNEN) are compositionally biased toward low complexity.

The sequence is that of Coiled-coil domain-containing protein PF3D7_1144200 from Plasmodium falciparum (isolate 3D7).